Here is a 149-residue protein sequence, read N- to C-terminus: Gonadotropin subunit beta-2 (149 aa).

Positions 1–24 (MARIPECTILLLLCMCVLAVPAQC) are cleaved as a signal peptide. Intrachain disulfides connect cysteine 30–cysteine 78, cysteine 44–cysteine 93, cysteine 47–cysteine 131, cysteine 55–cysteine 109, cysteine 59–cysteine 111, and cysteine 114–cysteine 121. Asparagine 34 is a glycosylation site (N-linked (GlcNAc...) asparagine).

It belongs to the glycoprotein hormones subunit beta family. In terms of assembly, heterodimer of an alpha and a beta chain.

The protein resides in the secreted. Functionally, involved in gametogenesis and steroidogenesis. The polypeptide is Gonadotropin subunit beta-2 (cgbb) (Clupea pallasii (Pacific herring)).